The primary structure comprises 356 residues: Carbohydrate sulfotransferase 10 (356 aa).

The Cytoplasmic portion of the chain corresponds to 1-6 (MHHQWL). A helical; Signal-anchor for type II membrane protein membrane pass occupies residues 7-27 (LLAACFWVIFMFMVASKFITL). Residues 28–356 (TFKDPDGYSA…GYQKPDFLLN (329 aa)) lie on the Lumenal side of the membrane. An N-linked (GlcNAc...) asparagine glycan is attached at Asn99. 3'-phosphoadenylyl sulfate is bound by residues 127–133 (PKVGNTQ) and 189–197 (RDPFERLIS). Residues Asn228 and Asn316 are each glycosylated (N-linked (GlcNAc...) asparagine).

It belongs to the sulfotransferase 2 family.

It localises to the golgi apparatus membrane. It catalyses the reaction 3-O-{beta-D-GlcA-(1-&gt;[3)-alpha-D-Xyl-(1-&gt;3)-beta-D-GlcA-(1-&gt;](n)-4)-beta-D-Xyl-(1-&gt;4)-Rib-ol-P-Rib-ol-P-3-beta-D-GalNAc-(1-&gt;3)-beta-D-GlcNAc-(1-&gt;4)-O-6-P-alpha-D-Man}-L-Thr-[protein] + 3'-phosphoadenylyl sulfate = 3-O-{O-3-S-beta-D-GlcA-(1-&gt;[3)-alpha-D-Xyl-(1-&gt;3)-beta-D-GlcA-(1-&gt;](n)-4)-beta-D-Xyl-(1-&gt;4)-Rib-ol-P-Rib-ol-P-3-beta-D-GalNAc-(1-&gt;3)-beta-D-GlcNAc-(1-&gt;4)-O-6-P-alpha-D-Man}-L-Thr-[protein] + adenosine 3',5'-bisphosphate + H(+). The enzyme catalyses 17beta-estradiol 3-O-(beta-D-glucuronate) + 3'-phosphoadenylyl sulfate = 17beta-estradiol 3-O-(3-sulfo-beta-D-glucuronate) + adenosine 3',5'-bisphosphate + H(+). It carries out the reaction 17beta-estradiol 3-O-(beta-D-glucuronate) 17-sulfate + 3'-phosphoadenylyl sulfate = 17beta-estradiol 3-O-(3-sulfo-beta-D-glucuronate) 17-sulfate + adenosine 3',5'-bisphosphate + H(+). The catalysed reaction is 17beta-estradiol 17-O-(beta-D-glucuronate) + 3'-phosphoadenylyl sulfate = 17beta-estradiol 17-O-(3-sulfo-beta-D-glucuronate) + adenosine 3',5'-bisphosphate + H(+). It catalyses the reaction 16alpha,17beta-estriol 3-O-(beta-D-glucuronate) + 3'-phosphoadenylyl sulfate = 16alpha,17beta-estriol 3-O-(3-sulfo-beta-D-glucuronate) + adenosine 3',5'-bisphosphate + H(+). The enzyme catalyses 16alpha,17beta-estriol 16-O-(beta-D-glucuronate) + 3'-phosphoadenylyl sulfate = 16alpha,17beta-estriol 16-O-(3-sulfo-beta-D-glucuronate) + adenosine 3',5'-bisphosphate + H(+). It carries out the reaction 16alpha,17beta-estriol 17-O-(beta-D-glucuronate) + 3'-phosphoadenylyl sulfate = 16alpha,17beta-estriol 17-O-(3-sulfo-beta-D-glucuronate) + adenosine 3',5'-bisphosphate + H(+). The catalysed reaction is estrone 3-O-(beta-D-glucuronate) + 3'-phosphoadenylyl sulfate = estrone 3-O-(3-sulfo-beta-D-glucuronate) + adenosine 3',5'-bisphosphate + H(+). It catalyses the reaction 3alpha,20alpha-dihydroxy-5beta-pregnane 3-O-(beta-D-glucuronate) + 3'-phosphoadenylyl sulfate = 3alpha,20alpha-dihydroxy-5beta-pregnane 3-O-(3-sulfo-beta-D-glucuronate) + adenosine 3',5'-bisphosphate + H(+). The enzyme catalyses testosterone 17-O-(beta-D-glucuronate) + 3'-phosphoadenylyl sulfate = testosterone 17-O-(3-sulfo-beta-D-glucuronate) + adenosine 3',5'-bisphosphate + H(+). It carries out the reaction 3beta-androst-5-en-17-one 3-O-(beta-D-glucuronate) + 3'-phosphoadenylyl sulfate = 3beta-androst-5-en-17-one 3-O-(3-sulfo-beta-D-glucuronate) + adenosine 3',5'-bisphosphate + H(+). The catalysed reaction is 3alpha,17alpha-dihydroxy-5beta-androstane-11-one-17beta-carboxylate 3-O-(beta-D-glucuronate) + 3'-phosphoadenylyl sulfate = 3alpha,17alpha-dihydroxy-5beta-androstane-11-one-17beta-carboxylate 3-O-(3-sulfo-beta-D-glucuronate) + adenosine 3',5'-bisphosphate + H(+). It catalyses the reaction 3alpha-hydroxyetiocholan-17-one 3-O-(beta-D-glucuronate) + 3'-phosphoadenylyl sulfate = 3alpha-hydroxyetiocholan-17-one 3-O-(3-sulfo-beta-D-glucuronate) + adenosine 3',5'-bisphosphate + H(+). It participates in steroid metabolism. Its pathway is protein modification; carbohydrate sulfation. In terms of biological role, catalyzes the transfer of sulfate from 3'-phosphoadenylyl sulfate (PAPS) to position 3 of terminal glucuronic acid of both protein- and lipid-linked oligosaccharides. Participates in biosynthesis of HNK-1 carbohydrate structure 3-O-sulfo-beta-D-GlcA-(1-&gt;3)-beta-D-Gal-(1-&gt;4)-D-GlcNAc-R, a sulfated glucuronyl-lactosaminyl residue carried by many neural recognition molecules, which is involved in cell interactions during ontogenetic development and in synaptic plasticity in the adult. May be indirectly involved in synapse plasticity of the hippocampus, via its role in HNK-1 biosynthesis. Sulfates terminal glucuronyl residue of the laminin globular (LG)-domain binding epitope on DAG1/alpha-dystroglycan and prevents further polymerization by LARGE1 glycosyltransferase. Likely defines the chain length of LG epitope, conferring binding specificity to extracellular matrix components. Plays a role in down-regulating the steroid hormones. Sulfates glucuronidated estrogens and androgens with an impact in hormone cycle and fertility. Has a preference for glucuronyl moiety at the 3-hydroxyl group of a sterol ring rather than the 17-hydroxyl group, showing high catalytic efficiency for 17beta-estradiol 3-O-(beta-D-glucuronate) and dehydroepiandrosterone 3-O-(beta-D-glucuronate) hormones. This Mus musculus (Mouse) protein is Carbohydrate sulfotransferase 10.